The following is an 84-amino-acid chain: Cryptic plasmid protein A (84 aa).

In Neisseria gonorrhoeae, this protein is Cryptic plasmid protein A (cppA).